A 330-amino-acid polypeptide reads, in one-letter code: MSTPTVKLNSGYEMPLVGFGLWKVNNDTCADQVYEAIKAGYRLFDGACDYGNEVECGQGVARAIKEGIVKREDLFIVSKLWNSFHDSERVEPICRKQLADWGVDYFDLYIVHFPIALKYVDPAVRYPPGWMSENDKLEFSNTPIHETWAAMEKLVDLKLARSIGVSNFSAQLLMDLLRYARVRPSTLQIEHHPYLTQKRLVDYAQKEGLAVTAYSSFGPLSFLELNLKDAHETPLLFEHPAITAIAEKHGKTPAQVLLRWATQRKVAVIPKSNNPTRLAQNLDVTSFNLEASEIESISALDRNLRFNDPLAITNFVSSLCAQYGFYAPIF.

Residue Tyr-50 is the Proton donor of the active site. His-112 lines the substrate pocket. NAD(+) contacts are provided by residues Ser-166–Asn-167, Ser-215–Glu-224, and Lys-271–Asn-281.

It belongs to the aldo/keto reductase family.

It carries out the reaction xylitol + NAD(+) = D-xylose + NADH + H(+). It catalyses the reaction xylitol + NADP(+) = D-xylose + NADPH + H(+). Its pathway is carbohydrate metabolism; D-xylose degradation. Its function is as follows. Catalyzes the initial reaction in the xylose utilization pathway by reducing D-xylose into xylitol. Xylose is a major component of hemicelluloses such as xylan. Most fungi utilize D-xylose via three enzymatic reactions, xylose reductase (XR), xylitol dehydrogenase (XDH), and xylulokinase, to form xylulose 5-phosphate, which enters pentose phosphate pathway. The chain is Probable NAD(P)H-dependent D-xylose reductase xyl1 (xyl1) from Aspergillus clavatus (strain ATCC 1007 / CBS 513.65 / DSM 816 / NCTC 3887 / NRRL 1 / QM 1276 / 107).